The chain runs to 525 residues: Glutamate--cysteine ligase (525 aa).

The protein belongs to the glutamate--cysteine ligase type 1 family. Type 1 subfamily.

The enzyme catalyses L-cysteine + L-glutamate + ATP = gamma-L-glutamyl-L-cysteine + ADP + phosphate + H(+). The protein operates within sulfur metabolism; glutathione biosynthesis; glutathione from L-cysteine and L-glutamate: step 1/2. The polypeptide is Glutamate--cysteine ligase (Pseudomonas putida (strain ATCC 47054 / DSM 6125 / CFBP 8728 / NCIMB 11950 / KT2440)).